A 268-amino-acid chain; its full sequence is Cytochrome c oxidase subunit 3 (268 aa).

Helical transmembrane passes span 23-43 (ILVSFSVMSIMLTLVFNMHGF), 49-69 (WVVFSAIVAIMTMALWFRDII), 88-108 (IGFILFVVSELFFFIAIFWAF), 141-161 (TILLLCSGATLTWSHHALLGG), 166-186 (TLLGLILTIALAVTFMICQYM), 203-223 (VFYFGTGFHGLHIIIGIIMLG), and 246-266 (ILYYHFVDVVWLFLYIVFYWW).

The protein belongs to the cytochrome c oxidase subunit 3 family. In terms of assembly, component of the cytochrome c oxidase (complex IV, CIV), a multisubunit enzyme composed of a catalytic core of 3 subunits and several supernumerary subunits. The complex exists as a monomer or a dimer and forms supercomplexes (SCs) in the inner mitochondrial membrane with ubiquinol-cytochrome c oxidoreductase (cytochrome b-c1 complex, complex III, CIII).

It localises to the mitochondrion inner membrane. The enzyme catalyses 4 Fe(II)-[cytochrome c] + O2 + 8 H(+)(in) = 4 Fe(III)-[cytochrome c] + 2 H2O + 4 H(+)(out). Its function is as follows. Component of the cytochrome c oxidase, the last enzyme in the mitochondrial electron transport chain which drives oxidative phosphorylation. The respiratory chain contains 3 multisubunit complexes succinate dehydrogenase (complex II, CII), ubiquinol-cytochrome c oxidoreductase (cytochrome b-c1 complex, complex III, CIII) and cytochrome c oxidase (complex IV, CIV), that cooperate to transfer electrons derived from NADH and succinate to molecular oxygen, creating an electrochemical gradient over the inner membrane that drives transmembrane transport and the ATP synthase. Cytochrome c oxidase is the component of the respiratory chain that catalyzes the reduction of oxygen to water. Electrons originating from reduced cytochrome c in the intermembrane space (IMS) are transferred via the dinuclear copper A center (CU(A)) of subunit 2 and heme A of subunit 1 to the active site in subunit 1, a binuclear center (BNC) formed by heme A3 and copper B (CU(B)). The BNC reduces molecular oxygen to 2 water molecules using 4 electrons from cytochrome c in the IMS and 4 protons from the mitochondrial matrix. The sequence is that of Cytochrome c oxidase subunit 3 (COX3) from Yarrowia lipolytica (strain CLIB 122 / E 150) (Yeast).